A 399-amino-acid chain; its full sequence is Stearoyl-[acyl-carrier-protein] 9-desaturase, seed specific, chloroplastic (399 aa).

A chloroplast-targeting transit peptide spans 1-34; that stretch reads MALKFNPLVSQPYKLASSARPPVSTFRSPKFLCL. Residues glutamate 141, glutamate 179, histidine 182, glutamate 232, glutamate 265, and histidine 268 each coordinate Fe cation.

It belongs to the fatty acid desaturase type 2 family. Homodimer. Requires Fe(2+) as cofactor. In terms of tissue distribution, developing seeds.

The protein localises to the plastid. Its subcellular location is the chloroplast. The enzyme catalyses octadecanoyl-[ACP] + 2 reduced [2Fe-2S]-[ferredoxin] + O2 + 2 H(+) = (9Z)-octadecenoyl-[ACP] + 2 oxidized [2Fe-2S]-[ferredoxin] + 2 H2O. Its pathway is lipid metabolism; fatty acid metabolism. Its function is as follows. Converts stearoyl-ACP to oleoyl-ACP by introduction of a cis double bond between carbons Delta(9) and Delta(10) of the acyl chain. The sequence is that of Stearoyl-[acyl-carrier-protein] 9-desaturase, seed specific, chloroplastic from Brassica napus (Rape).